Here is a 382-residue protein sequence, read N- to C-terminus: Osmoprotectant import ATP-binding protein OsmV (382 aa).

The region spanning 2-241 (IKLENLTKQF…PANEFVGSFV (240 aa)) is the ABC transporter domain. Position 39–46 (39–46 (GPSGCGKT)) interacts with ATP. 2 CBS domains span residues 258-320 (VTDQ…THPF) and 322-373 (ITGK…GRTR).

This sequence belongs to the ABC transporter superfamily. The complex is composed of two ATP-binding proteins (OsmV), two transmembrane proteins (OsmW and OsmY) and a solute-binding protein (OsmX).

It is found in the cell inner membrane. Functionally, part of the OsmU ABC transporter complex, which is involved in the uptake of osmoprotectants such as choline-O-sulfate and glycine betaine. Probably responsible for energy coupling to the transport system. This Salmonella typhimurium (strain LT2 / SGSC1412 / ATCC 700720) protein is Osmoprotectant import ATP-binding protein OsmV (osmV).